Reading from the N-terminus, the 137-residue chain is Large ribosomal subunit protein uL16 (137 aa).

It belongs to the universal ribosomal protein uL16 family. Part of the 50S ribosomal subunit.

Its function is as follows. Binds 23S rRNA and is also seen to make contacts with the A and possibly P site tRNAs. The polypeptide is Large ribosomal subunit protein uL16 (Acinetobacter baumannii (strain AB307-0294)).